Reading from the N-terminus, the 66-residue chain is Large ribosomal subunit protein bL35 (66 aa).

It belongs to the bacterial ribosomal protein bL35 family.

In Borreliella afzelii (strain PKo) (Borrelia afzelii), this protein is Large ribosomal subunit protein bL35.